A 296-amino-acid polypeptide reads, in one-letter code: LysM and putative peptidoglycan-binding domain-containing protein 4 (296 aa).

Residues 1–217 lie on the Extracellular side of the membrane; the sequence is MRHEELLTKT…PMDGADCGIQ (217 aa). Positions 29 to 67 are disordered; the sequence is KNGSGDSGDSSEEESHRVVLRPRGKERHKSGVHQPPQAG. Asn-30 carries an N-linked (GlcNAc...) asparagine glycan. A compositionally biased stretch (basic residues) spans 46 to 59; that stretch reads VVLRPRGKERHKSG. In terms of domain architecture, LysM spans 74–118; sequence LQRELAQEDSLNKLALQYGCKVADIKKVNNFIREQDLYALKSVKI. A helical transmembrane segment spans residues 218–238; it reads WWNAVFIMLLIGIVLPVFYLV. The Cytoplasmic segment spans residues 239-296; sequence YFKIQASGETPNSLNTTVIPNGSMAMGTVPGQAPRLAVAVPAVTSADSQFSQTTQAGS.

The protein localises to the membrane. The sequence is that of LysM and putative peptidoglycan-binding domain-containing protein 4 (LYSMD4) from Homo sapiens (Human).